A 348-amino-acid chain; its full sequence is Hereditary hemochromatosis protein homolog (348 aa).

Residues 1-22 (MGPRARPALFFLILLRTVAAQG) form the signal peptide. The segment at 23 to 114 (RPPRSHSLRY…IMDNHNHSKE (92 aa)) is alpha-1. Topologically, residues 23–306 (RPPRSHSLRY…WEPSLSNTLV (284 aa)) are extracellular. Asn-110, Asn-130, and Asn-234 each carry an N-linked (GlcNAc...) asparagine glycan. The tract at residues 115-205 (SHTLQVILGC…ELGRGVLDQQ (91 aa)) is alpha-2. 2 cysteine pairs are disulfide-bonded: Cys-124/Cys-187 and Cys-225/Cys-282. The tract at residues 206 to 297 (VPPLVKVTHH…GLDQPLTATW (92 aa)) is alpha-3. In terms of domain architecture, Ig-like C1-type spans 207 to 296 (PPLVKVTHHV…PGLDQPLTAT (90 aa)). The interval 298 to 306 (EPSLSNTLV) is connecting peptide. Residues 307-330 (TGVISGIAVCVIIFLIGILFRILR) traverse the membrane as a helical segment. Residues 331-348 (KRQASRGAMGDYVLAECE) are Cytoplasmic-facing.

It belongs to the MHC class I family. Binds TFR through the extracellular domain in a pH-dependent manner.

It is found in the cell membrane. Binds to transferrin receptor (TFR) and reduces its affinity for iron-loaded transferrin. The protein is Hereditary hemochromatosis protein homolog (HFE) of Dicerorhinus sumatrensis (Sumatran rhinoceros).